We begin with the raw amino-acid sequence, 794 residues long: Copper-exporting P-type ATPase (794 aa).

HMA domains are found at residues 5 to 70 (KKTT…YGVL) and 72 to 138 (ETAE…YDAQ). The Cu(+) site is built by Cys16, Cys19, Cys83, and Cys86. 6 consecutive transmembrane segments (helical) span residues 162-182 (IISA…LFGI), 187-207 (IFMN…IIGW), 224-244 (MDVL…YEMV), 250-270 (ANVM…LILF), 411-431 (YFVP…IAFV), and 438-458 (PALV…LGLA). Residue Asp495 is the 4-aspartylphosphate intermediate of the active site. Mg(2+)-binding residues include Asp689 and Asp693. The next 2 membrane-spanning stretches (helical) occupy residues 747–766 (LFWA…LGLL) and 770–789 (IAGA…ALRL).

The protein belongs to the cation transport ATPase (P-type) (TC 3.A.3) family. Type IB subfamily.

The protein resides in the cell membrane. It carries out the reaction Cu(+)(in) + ATP + H2O = Cu(+)(out) + ADP + phosphate + H(+). Its function is as follows. Involved in copper export. The chain is Copper-exporting P-type ATPase (copA) from Staphylococcus saprophyticus subsp. saprophyticus (strain ATCC 15305 / DSM 20229 / NCIMB 8711 / NCTC 7292 / S-41).